We begin with the raw amino-acid sequence, 108 residues long: Urease subunit beta (108 aa).

The protein belongs to the urease beta subunit family. In terms of assembly, heterotrimer of UreA (gamma), UreB (beta) and UreC (alpha) subunits. Three heterotrimers associate to form the active enzyme.

Its subcellular location is the cytoplasm. It catalyses the reaction urea + 2 H2O + H(+) = hydrogencarbonate + 2 NH4(+). Its pathway is nitrogen metabolism; urea degradation; CO(2) and NH(3) from urea (urease route): step 1/1. The chain is Urease subunit beta from Chromohalobacter salexigens (strain ATCC BAA-138 / DSM 3043 / CIP 106854 / NCIMB 13768 / 1H11).